Here is a 305-residue protein sequence, read N- to C-terminus: Beta-carotene 3-hydroxylase, chloroplastic (305 aa).

The transit peptide at 1–41 (MAFAMSSSLTLFQYQSFGKKPFFSRRRDFAGCSMMNPLVAR) directs the protein to the chloroplast. Helical transmembrane passes span 98-118 (YLVAAMASSLGFTFMAAAAVY) and 129-149 (AVPLTEMMGTFSLAVGSAVGM). The region spanning 146–272 (AVGMEYWARW…KFNGVPYGLF (127 aa)) is the Fatty acid hydroxylase domain. A Histidine box-1 motif is present at residues 157–162 (HRALWH). A Histidine box-2 motif is present at residues 169-173 (HESHH). 2 helical membrane-spanning segments follow: residues 184–204 (DVFALINAFPAVALLAFGFFH) and 207–227 (FFSGLCFGAGLGITLYGMAYM). Positions 230-235 (HDGLVH) match the Histidine box-3 motif. The Histidine box-4 signature appears at 256 to 260 (HQIHH).

This sequence belongs to the sterol desaturase family. As to quaternary structure, homodimer. In terms of tissue distribution, expressed in flower buds and lips. Detected in roots and leaves.

Its subcellular location is the plastid. It is found in the chloroplast membrane. The enzyme catalyses all-trans-beta-carotene + 4 reduced [2Fe-2S]-[ferredoxin] + 2 O2 + 4 H(+) = all-trans-zeaxanthin + 4 oxidized [2Fe-2S]-[ferredoxin] + 2 H2O. In terms of biological role, nonheme diiron monooxygenase involved in the biosynthesis of xanthophylls. Specific for beta-ring hydroxylations of beta-carotene. Uses ferredoxin as an electron donor. The chain is Beta-carotene 3-hydroxylase, chloroplastic (BHY) from Oncidium hybrid cultivar (Orchid).